Reading from the N-terminus, the 446-residue chain is Probable glycine dehydrogenase (decarboxylating) subunit 1 (446 aa).

It belongs to the GcvP family. N-terminal subunit subfamily. As to quaternary structure, the glycine cleavage system is composed of four proteins: P, T, L and H. In this organism, the P 'protein' is a heterodimer of two subunits.

The catalysed reaction is N(6)-[(R)-lipoyl]-L-lysyl-[glycine-cleavage complex H protein] + glycine + H(+) = N(6)-[(R)-S(8)-aminomethyldihydrolipoyl]-L-lysyl-[glycine-cleavage complex H protein] + CO2. In terms of biological role, the glycine cleavage system catalyzes the degradation of glycine. The P protein binds the alpha-amino group of glycine through its pyridoxal phosphate cofactor; CO(2) is released and the remaining methylamine moiety is then transferred to the lipoamide cofactor of the H protein. This chain is Probable glycine dehydrogenase (decarboxylating) subunit 1, found in Desulfitobacterium hafniense (strain DSM 10664 / DCB-2).